A 313-amino-acid polypeptide reads, in one-letter code: Syndecan-1 (313 aa).

Residues 1–22 (MRRAALWLWLCALALRLQPALP) form the signal peptide. Topologically, residues 23-257 (QIVTANVPPE…GLLDRKEVLG (235 aa)) are extracellular. Disordered regions lie at residues 27–58 (ANVP…MTLS) and 95–186 (AGEK…VEDG). Residues 32–42 (EDQDGSGDDSD) are compositionally biased toward acidic residues. Ser37 is a glycosylation site (O-linked (Xyl...) (chondroitin sulfate) serine). A glycan (N-linked (GlcNAc...) asparagine) is linked at Asn43. Ser45 and Ser47 each carry an O-linked (Xyl...) (heparan sulfate) serine glycan. Residues 97 to 129 (EKPEEGEPVAHVEAEPDFTARDKEKEATTRPRE) show a composition bias toward basic and acidic residues. The span at 135–154 (VTQQASTAARATTAQASVTS) shows a compositional bias: low complexity. O-linked (Xyl...) (chondroitin sulfate) serine glycans are attached at residues Ser209 and Ser219. A helical membrane pass occupies residues 258–278 (GVIAGGLVGLIFAVCLVAFML). The Cytoplasmic portion of the chain corresponds to 279-313 (YRMKKKDEGSYSLEEPKQANGGAYQKPTKQEEFYA). A compositionally biased stretch (basic and acidic residues) spans 286–295 (EGSYSLEEPK). The disordered stretch occupies residues 286–313 (EGSYSLEEPKQANGGAYQKPTKQEEFYA). Ser288 is subject to Phosphoserine.

Belongs to the syndecan proteoglycan family. In terms of assembly, interacts with CDCP1. Interacts (via C-terminus) with TIAM1 (via PDZ domain). Interacts with MDK. Shedding is enhanced by a number of factors such as heparanase, thrombin or EGF. Also by stress and wound healing. PMA-mediated shedding is inhibited by TIMP3.

Its subcellular location is the membrane. The protein localises to the secreted. It is found in the extracellular exosome. In terms of biological role, cell surface proteoglycan that contains both heparan sulfate and chondroitin sulfate and that links the cytoskeleton to the interstitial matrix. Regulates exosome biogenesis in concert with SDCBP and PDCD6IP. Able to induce its own expression in dental mesenchymal cells and also in the neighboring dental epithelial cells via an MSX1-mediated pathway. The polypeptide is Syndecan-1 (Rattus norvegicus (Rat)).